A 347-amino-acid polypeptide reads, in one-letter code: Phenylalanine--tRNA ligase alpha subunit (347 aa).

Glutamate 265 contacts Mg(2+).

The protein belongs to the class-II aminoacyl-tRNA synthetase family. Phe-tRNA synthetase alpha subunit type 1 subfamily. In terms of assembly, tetramer of two alpha and two beta subunits. Requires Mg(2+) as cofactor.

The protein localises to the cytoplasm. The enzyme catalyses tRNA(Phe) + L-phenylalanine + ATP = L-phenylalanyl-tRNA(Phe) + AMP + diphosphate + H(+). The chain is Phenylalanine--tRNA ligase alpha subunit from Mycolicibacterium paratuberculosis (strain ATCC BAA-968 / K-10) (Mycobacterium paratuberculosis).